Consider the following 133-residue polypeptide: uncharacterized protein (133 aa).

This is an uncharacterized protein from Human adenovirus B serotype 7 (HAdV-7).